The sequence spans 133 residues: Protein NrdI (133 aa).

The protein belongs to the NrdI family.

In terms of biological role, probably involved in ribonucleotide reductase function. The protein is Protein NrdI of Cronobacter sakazakii (strain ATCC BAA-894) (Enterobacter sakazakii).